The primary structure comprises 571 residues: Membrane protein insertase YidC (571 aa).

Residues T4–S24 traverse the membrane as a helical segment. Residues A29–S78 form a disordered region. 2 stretches are compositionally biased toward low complexity: residues P34–A43 and P55–S78. The next 4 helical transmembrane spans lie at L369–Y389, G440–V460, Y483–A503, and P518–V538.

Belongs to the OXA1/ALB3/YidC family. Type 1 subfamily. As to quaternary structure, interacts with the Sec translocase complex via SecD. Specifically interacts with transmembrane segments of nascent integral membrane proteins during membrane integration.

The protein resides in the cell inner membrane. Its function is as follows. Required for the insertion and/or proper folding and/or complex formation of integral membrane proteins into the membrane. Involved in integration of membrane proteins that insert both dependently and independently of the Sec translocase complex, as well as at least some lipoproteins. Aids folding of multispanning membrane proteins. The protein is Membrane protein insertase YidC of Stenotrophomonas maltophilia (strain K279a).